Here is a 69-residue protein sequence, read N- to C-terminus: Putative membrane protein insertion efficiency factor (69 aa).

The protein belongs to the UPF0161 family.

The protein localises to the cell membrane. In terms of biological role, could be involved in insertion of integral membrane proteins into the membrane. The protein is Putative membrane protein insertion efficiency factor of Alkaliphilus metalliredigens (strain QYMF).